A 405-amino-acid chain; its full sequence is Acetyl-CoA decarbonylase/synthase complex subunit delta (405 aa).

The protein belongs to the CdhD family. In terms of assembly, heterodimer of delta and gamma chains. The ACDS complex is made up of alpha, epsilon, beta, gamma and delta chains with a probable stoichiometry of (alpha(2)epsilon(2))(4)-beta(8)-(gamma(1)delta(1))(8).

Its function is as follows. Part of a complex that catalyzes the reversible cleavage of acetyl-CoA, allowing autotrophic growth from CO(2). Probably maintains the overall quaternary structure of the ACDS complex. The chain is Acetyl-CoA decarbonylase/synthase complex subunit delta from Methanocaldococcus jannaschii (strain ATCC 43067 / DSM 2661 / JAL-1 / JCM 10045 / NBRC 100440) (Methanococcus jannaschii).